Here is a 1196-residue protein sequence, read N- to C-terminus: Probable cation-transporting ATPase 13A4 (1196 aa).

The Cytoplasmic segment spans residues 1–31; that stretch reads MGHFEKGQHALLNEGEENEMEIFGYRTQGCR. Residues 32–52 lie within the membrane without spanning it; it reads KSLCLAGSIFSFGILPLVFYW. Over 53 to 197 the chain is Cytoplasmic; the sequence is RPAWHVWAHC…DVEVTPIWKL (145 aa). Residues 198-218 form a helical membrane-spanning segment; that stretch reads LIKEVLNPFYIFQLFSVCLWF. The Lumenal segment spans residues 219-223; it reads SEDYK. Residues 224–244 traverse the membrane as a helical segment; sequence EYAFAIIIMSIISISLTVYDL. At 245–400 the chain is on the cytoplasmic side; it reads REQSVKLHHL…NFQLYRDAIR (156 aa). The helical transmembrane segment at 401–421 threads the bilayer; sequence FLLCLVGTATIGMIYTLCVYV. Residues 422 to 436 lie on the Lumenal side of the membrane; the sequence is LSGEPPEEVVRKALD. The helical transmembrane segment at 437–457 threads the bilayer; the sequence is VITIAVPPALPAALTTGIIYA. The Cytoplasmic portion of the chain corresponds to 458–900; the sequence is QRRLKKRGIF…KEGRAALVTS (443 aa). Residue Asp-486 is the 4-aspartylphosphate intermediate of the active site. Residues Asp-848 and Asp-852 each contribute to the Mg(2+) site. A helical transmembrane segment spans residues 901 to 921; sequence FCMFKYMALYSMIQYVGVLLL. The Lumenal portion of the chain corresponds to 922–932; it reads YWETNSLSNYQ. A helical transmembrane segment spans residues 933-953; that stretch reads FLFQDLAITTLIGVTMNLNGA. Topologically, residues 954 to 972 are cytoplasmic; it reads YPKLVPFRPAGRLISPPLL. A helical membrane pass occupies residues 973–993; it reads LSVIFNILLSLAMHIAGFILV. The Lumenal segment spans residues 994–1035; sequence QRQPWYSVEIHSACTVQNESISELTMSPTAPEKMESNSTFTS. A helical membrane pass occupies residues 1036–1056; it reads FENTTVWFLGTINCITVALVF. The Cytoplasmic segment spans residues 1057 to 1070; sequence SKGKPFRQPTYTNY. Residues 1071–1091 traverse the membrane as a helical segment; it reads IFVLVLIIQLGVCLFILFADI. Topologically, residues 1092 to 1109 are lumenal; sequence PELYRRLDLLCTPVLWRA. A helical membrane pass occupies residues 1110–1130; it reads SIVIMLSLNFIVSLVAEEAVI. Residues 1131 to 1196 lie on the Cytoplasmic side of the membrane; it reads ENRALWMMIK…PVFESNEEQL (66 aa).

The protein belongs to the cation transport ATPase (P-type) (TC 3.A.3) family. Type V subfamily. In terms of tissue distribution, expressed in heart, placenta, liver, skeletal muscles, and pancreas. Lower levels of expression are also detected in brain, lung and kidney. Weakly expressed in the adult brain. Expression in fetal brain is higher than in adult brain, with levels similar to several other fetal tissues including spleen and skeletal muscle. In adult brain expressed at low levels in all tissues examined, including the temporal lobe and putamen. Highly expressed in the respiratory and integumentary systems.

It is found in the early endosome membrane. It localises to the late endosome membrane. The protein resides in the recycling endosome membrane. The enzyme catalyses ATP + H2O = ADP + phosphate + H(+). In Homo sapiens (Human), this protein is Probable cation-transporting ATPase 13A4 (ATP13A4).